The following is a 623-amino-acid chain: Laccase-1 (623 aa).

Residues 1-22 (MKTFTSALALVVGMLAPGAVVA) form the signal peptide. The propeptide occupies 23-50 (APPSTPAQRDLVELREARQEGGKDLRPR). Cys-54 and Cys-62 are joined by a disulfide. Residues Asn-89 and Asn-138 are each glycosylated (N-linked (GlcNAc...) asparagine). The Cu cation site is built by His-143, His-145, His-188, and His-190. 2 disulfides stabilise this stretch: Cys-164/Cys-590 and Cys-348/Cys-382. Asn-251, Asn-266, Asn-294, and Asn-339 each carry an N-linked (GlcNAc...) asparagine glycan. N-linked (GlcNAc...) asparagine glycosylation is found at Asn-426 and Asn-446. Cu cation-binding residues include His-481, His-484, His-486, His-552, Cys-553, His-554, and His-558. The propeptide occupies 610-623 (KRRRWVEESEWLVR).

The protein belongs to the multicopper oxidase family. In terms of assembly, monomer. Cu cation is required as a cofactor. Secreted protein; extracellular space.

The enzyme catalyses 4 hydroquinone + O2 = 4 benzosemiquinone + 2 H2O. In terms of biological role, lignin degradation and detoxification of lignin-derived products. The chain is Laccase-1 (LAC1) from Melanocarpus albomyces.